A 447-amino-acid polypeptide reads, in one-letter code: Argininosuccinate lyase (447 aa).

The protein belongs to the lyase 1 family. Argininosuccinate lyase subfamily.

The protein resides in the cytoplasm. It carries out the reaction 2-(N(omega)-L-arginino)succinate = fumarate + L-arginine. It functions in the pathway amino-acid biosynthesis; L-arginine biosynthesis; L-arginine from L-ornithine and carbamoyl phosphate: step 3/3. The polypeptide is Argininosuccinate lyase (Bacteroides fragilis (strain ATCC 25285 / DSM 2151 / CCUG 4856 / JCM 11019 / LMG 10263 / NCTC 9343 / Onslow / VPI 2553 / EN-2)).